The sequence spans 869 residues: Alanine--tRNA ligase (869 aa).

Positions 559, 563, 660, and 664 each coordinate Zn(2+).

The protein belongs to the class-II aminoacyl-tRNA synthetase family. Zn(2+) serves as cofactor.

It localises to the cytoplasm. It catalyses the reaction tRNA(Ala) + L-alanine + ATP = L-alanyl-tRNA(Ala) + AMP + diphosphate. In terms of biological role, catalyzes the attachment of alanine to tRNA(Ala) in a two-step reaction: alanine is first activated by ATP to form Ala-AMP and then transferred to the acceptor end of tRNA(Ala). Also edits incorrectly charged Ser-tRNA(Ala) and Gly-tRNA(Ala) via its editing domain. This chain is Alanine--tRNA ligase, found in Herminiimonas arsenicoxydans.